A 202-amino-acid chain; its full sequence is MKFFLDLLPVILFFVAYKFAGAAPDDSHALVAQFLGAGISPSQAPILIATAVAIAATLAQVLIVWLRHGKVDKMLWVSLAIITLFGGATLVFHNPTFIKWKPTVFYWTFAGALAVSALLFRRNLVQKMLEAQIRLPAPVWQRLNLAWIGFFTLMGFLNLYVAYGYSEEAWVNFKLFGAMGLMLAFFLGQGFYLSRHLEEDAK.

6 consecutive transmembrane segments (helical) span residues 3–23 (FFLD…AGAA), 46–66 (ILIA…IVWL), 74–94 (MLWV…VFHN), 100–120 (WKPT…ALLF), 145–165 (LAWI…AYGY), and 173–193 (FKLF…GFYL).

The protein belongs to the YciB family.

The protein resides in the cell inner membrane. In terms of biological role, plays a role in cell envelope biogenesis, maintenance of cell envelope integrity and membrane homeostasis. In Azoarcus sp. (strain BH72), this protein is Inner membrane-spanning protein YciB.